The following is a 428-amino-acid chain: GTPase Obg (428 aa).

The Obg domain maps to 1–158; that stretch reads MFVDQVKVYV…RYIVLELKVL (158 aa). Residues 117 to 143 are disordered; sequence AKGGRGGRGNTRFATPANPAPQLSEHG. Positions 159 to 329 constitute an OBG-type G domain; that stretch reads ADVGLVGFPS…LLFEVANQLE (171 aa). GTP contacts are provided by residues 165–172, 190–194, 212–215, 282–285, and 310–312; these read GFPSVGKS, FTTLV, DLPG, NKMD, and SAV. 2 residues coordinate Mg(2+): serine 172 and threonine 192. The OCT domain occupies 350–428; the sequence is TMEDEEIPFN…LLEFEFEFID (79 aa).

Belongs to the TRAFAC class OBG-HflX-like GTPase superfamily. OBG GTPase family. Monomer. Mg(2+) serves as cofactor.

The protein resides in the cytoplasm. An essential GTPase which binds GTP, GDP and possibly (p)ppGpp with moderate affinity, with high nucleotide exchange rates and a fairly low GTP hydrolysis rate. Plays a role in control of the cell cycle, stress response, ribosome biogenesis and in those bacteria that undergo differentiation, in morphogenesis control. This Bacillus velezensis (strain DSM 23117 / BGSC 10A6 / LMG 26770 / FZB42) (Bacillus amyloliquefaciens subsp. plantarum) protein is GTPase Obg.